Reading from the N-terminus, the 522-residue chain is Non-structural maintenance of chromosome element 6 (522 aa).

The segment covering 482–492 (KQKDRYFKDKT) has biased composition (basic and acidic residues). A disordered region spans residues 482–522 (KQKDRYFKDKTSNLSMKENKSFSAKKVKKGKKKNKRQAYKR). Positions 504–522 (SAKKVKKGKKKNKRQAYKR) are enriched in basic residues.

Component of the smc5/smc6 complex which consists of two subcomplexes, smc5-smc6-nse2 and nse1-nse2-nse4. Interacts with nse5.

The protein localises to the nucleus. Its subcellular location is the chromosome. Acts in a DNA repair pathway for removal of UV-induced DNA damage that is distinct from classical nucleotide excision repair and in repair of ionizing radiation damage. Functions in homologous recombination repair of DNA double strand breaks and in recovery of stalled replication forks. May prevent formation of excessive Holliday junctions or assist in their resolution. The sequence is that of Non-structural maintenance of chromosome element 6 (nse6) from Schizosaccharomyces pombe (strain 972 / ATCC 24843) (Fission yeast).